A 660-amino-acid polypeptide reads, in one-letter code: UvrABC system protein B (660 aa).

Residues 27 to 414 form the Helicase ATP-binding domain; sequence NGVNEGKRHQ…TDEMVQQIIR (388 aa). 40-47 provides a ligand contact to ATP; sequence GATGTGKT. Residues 93-116 carry the Beta-hairpin motif; it reads YYDYYQPEAYVPSTDTFIEKDASI. Residues 431 to 593 form the Helicase C-terminal domain; it reads QIDDLLGEIQ…ITPTTINKKI (163 aa). Residues 603-622 form a disordered region; sequence NDETNEQQQTEVPKKMTKKE. The 36-residue stretch at 624–659 folds into the UVR domain; that stretch reads EKTIANIEKEMKQAAKDLDFEKATELRDMLFELKAE.

The protein belongs to the UvrB family. In terms of assembly, forms a heterotetramer with UvrA during the search for lesions. Interacts with UvrC in an incision complex.

The protein localises to the cytoplasm. The UvrABC repair system catalyzes the recognition and processing of DNA lesions. A damage recognition complex composed of 2 UvrA and 2 UvrB subunits scans DNA for abnormalities. Upon binding of the UvrA(2)B(2) complex to a putative damaged site, the DNA wraps around one UvrB monomer. DNA wrap is dependent on ATP binding by UvrB and probably causes local melting of the DNA helix, facilitating insertion of UvrB beta-hairpin between the DNA strands. Then UvrB probes one DNA strand for the presence of a lesion. If a lesion is found the UvrA subunits dissociate and the UvrB-DNA preincision complex is formed. This complex is subsequently bound by UvrC and the second UvrB is released. If no lesion is found, the DNA wraps around the other UvrB subunit that will check the other stand for damage. The chain is UvrABC system protein B from Staphylococcus saprophyticus subsp. saprophyticus (strain ATCC 15305 / DSM 20229 / NCIMB 8711 / NCTC 7292 / S-41).